The following is a 795-amino-acid chain: Phenylalanine--tRNA ligase beta subunit (795 aa).

The 110-residue stretch at 39 to 148 folds into the tRNA-binding domain; the sequence is AGDFSGVVVG…QNAPVGTNLR (110 aa). The region spanning 401–476 is the B5 domain; the sequence is PKLNQVSLRR…RIYGYNSIPN (76 aa). Mg(2+)-binding residues include Asp454, Asp460, Glu463, and Glu464. One can recognise an FDX-ACB domain in the interval 701-794; sequence SRFPANRRDL…LKQRFNAYLR (94 aa).

The protein belongs to the phenylalanyl-tRNA synthetase beta subunit family. Type 1 subfamily. Tetramer of two alpha and two beta subunits. Mg(2+) is required as a cofactor.

The protein localises to the cytoplasm. The catalysed reaction is tRNA(Phe) + L-phenylalanine + ATP = L-phenylalanyl-tRNA(Phe) + AMP + diphosphate + H(+). In Pasteurella multocida (strain Pm70), this protein is Phenylalanine--tRNA ligase beta subunit (pheT).